We begin with the raw amino-acid sequence, 410 residues long: MTLLKNKKQLLEKQYIKKNTKKFNQVILALFSGGFATFSILYCVQSILPMFSKQFYLTPAESSLALSAATITMSLGMLFTGPLSDIIGRKSIMSTSLFIAAMLTMICSMMTSWISIVLLRALTGLALSGVVAVAMTYISEEIHPNSLSFCMGLYISGNTIGGFLGRLLSSILAEKFSWSISLMVIGLFSFISSCFFLYFLPPSKNFLSVSINFHKCLHRFYLQLKNRVLFFLFIIGFILMGSFVTIFNYIGYRLMLEPFFLCQSSIGLLSTIYLTGVYSSPKAGVLINKYNRNNILIVSLMLMIIGLFITQYNQLFIIILGLIIFSGGFFASHSTASSWVGSYSNIAKIQATSLYLFFYYLGSSVFGTFGGFFWFHMQWLGISVFIITMLFFGVFLSFKLKQKNFKNKYF.

The next 12 helical transmembrane spans lie at 27-47, 63-83, 97-117, 118-138, 145-165, 180-200, 228-248, 254-274, 293-313, 316-332, 355-375, and 378-398; these read ILAL…VQSI, SLAL…TGPL, LFIA…ISIV, LLRA…MTYI, NSLS…GFLG, ISLM…LYFL, VLFF…TIFN, LMLE…TIYL, NNIL…TQYN, FIII…FFAS, YLFF…FFWF, and QWLG…FLSF.

It belongs to the major facilitator superfamily.

The protein resides in the cell membrane. This is an uncharacterized protein from Buchnera aphidicola subsp. Acyrthosiphon pisum (strain APS) (Acyrthosiphon pisum symbiotic bacterium).